The following is a 592-amino-acid chain: Inactive heparanase-2 (592 aa).

A signal peptide spans 1–41 (MRVLCAFPEAMPSSNSRPPACLAPGALYLALLLHLSLSSQA). N-linked (GlcNAc...) asparagine glycans are attached at residues Asn254 and Asn392.

Belongs to the glycosyl hydrolase 79 family. In terms of assembly, interacts with HPSE. Interacts with SDC1 (via glycan chains). In terms of tissue distribution, widely expressed, with the highest expression in brain, mammary gland, prostate, small intestine, testis and uterus. In the central nervous system, expressed in the spinal cord, caudate nucleus, thalamus, substantia nigra, medulla oblongata, putamen and pons. In the urinary bladder, expressed in longitudinal and circular layers of detrusor muscle. Found both in normal and cancer tissues.

The protein resides in the secreted. The protein localises to the extracellular space. It localises to the extracellular matrix. Its function is as follows. Binds heparin and heparan sulfate with high affinity, but lacks heparanase activity. Inhibits HPSE, possibly by competing for its substrates (in vitro). The protein is Inactive heparanase-2 (HPSE2) of Homo sapiens (Human).